We begin with the raw amino-acid sequence, 115 residues long: Virulence-associated protein A' (115 aa).

An HTH cro/C1-type domain is found at 16 to 70; it reads IKSDLDGLGINITEAAKALDVTRAALSEIINGKRGISAKMAWKLSKAFTNSDPEF. The H-T-H motif DNA-binding region spans 27-46; sequence ITEAAKALDVTRAALSEIIN.

This sequence belongs to the VapA/VapI family.

The protein is Virulence-associated protein A' (vapA') of Dichelobacter nodosus (Bacteroides nodosus).